A 773-amino-acid polypeptide reads, in one-letter code: Angiomotin-like protein 2 (773 aa).

Disordered stretches follow at residues 41–157 (GGAG…HVRS), 169–238 (RNGA…SPHF), and 259–309 (QYQY…LAQM). Basic and acidic residues-rich tracts occupy residues 80–91 (QGGETHLAENRL), 100–112 (KGEE…EAKA), and 141–152 (RRQDEALRELRH). A required for interaction with CDH5 region spans residues 101 to 302 (GEELPTYEEA…GPPGAQATSG (202 aa)). Tyr-107 is subject to Phosphotyrosine; by FGFR1. Over residues 177 to 190 (HMSSSHSFPQLARS) the composition is skewed to polar residues. The span at 196–213 (PRGPPAEGPEPRGPPPQY) shows a compositional bias: pro residues. The tract at residues 220-302 (QETAAVNDPR…GPPGAQATSG (83 aa)) is required for interaction with CDH1. A coiled-coil region spans residues 304-577 (AHLAQMESVL…KYLEERAMRQ (274 aa)). Glycyl lysine isopeptide (Lys-Gly) (interchain with G-Cter in ubiquitin) cross-links involve residues Lys-342 and Lys-403. Disordered stretches follow at residues 589 to 611 (QRDT…NEGL) and 677 to 754 (WQGF…TTSL). Residues 701-710 (EEPPATPPLP) are compositionally biased toward pro residues. The span at 719–734 (DGSTQTDGPADSTSAC) shows a compositional bias: polar residues. 2 positions are modified to phosphoserine: Ser-753 and Ser-756. A PDZ-binding motif is present at residues 770–773 (EILI).

It belongs to the angiomotin family. As to quaternary structure, part of a complex composed of AMOTL2, MAGI1 and CDH5, within the complex AMOTL2 acts as a scaffold protein for the interaction of MAGI1 with CDH5. The complex is required for coupling actin fibers to cell junctions in endothelial cells. Within the complex AMOTL2 (via its N-terminus) interacts with CDH5. Interacts (via N-terminus) with MAGI1. Interacts (via N-terminus) with ACTB; the interaction facilitates binding of cell junction complexes to actin fibers in endothelial cells. Interacts with CDH1; the interaction may facilitate binding of radial actin fibers to cell junction complexes. Interacts with SRC. Interacts with YAP1; the interaction is required for ubiquitination of AMOTL2 and localization of YAP1 to tight junctions. Interacts with WWP1; the interaction facilitates WWP1 interaction with the Crumbs complex and subsequent WWP1 translocation to the plasma membrane. WWP1 interaction with the Crumbs complex promotes WWP1 monoubiquitination of AMOTL2 which subsequently activates the Hippo signaling pathway. When ubiquitinated interacts with LATS2 (via UBA domain); the interaction promotes LATS2 phosphorylation of YAP1. Interacts (via PPXY motif) with WWTR1/TAZ (via WW domain); the interaction promotes WWTR1/TAZ localization to the cytoplasm and thereby inhibition of its transcriptional properties. Interacts with PHLDB2; interaction may facilitate PHLDB2 localization to the myotube podosome cortex that surrounds the core. Monoubiquitinated at Lys-342 and Lys-403 by Crumbs complex-bound WWP1. De-ubiquitinated at Lys-342 and Lys-403 by USP9X; the interaction may be promoted by cell contact inhibition. Deubiquitination of AMOTL2 negatively regulates Hippo signaling activation. Post-translationally, phosphorylation at Tyr-107 is necessary for efficient binding to SRC and synergistically functioning with SRC to activate the downstream MAPK pathway.

It localises to the recycling endosome. It is found in the cytoplasm. Its subcellular location is the cell projection. The protein localises to the podosome. The protein resides in the cell junction. Its function is as follows. Regulates the translocation of phosphorylated SRC to peripheral cell-matrix adhesion sites. Required for proper architecture of actin filaments. Plays a role in coupling actin fibers to cell junctions in endothelial cells and is therefore required for correct endothelial cell morphology via facilitating transcellular transmission of mechanical force resulting in endothelial cell elongation. Required for the anchoring of radial actin fibers to CDH1 junction complexes at the cell membrane which facilitates organization of radial actin fiber structure and cellular response to contractile forces. This contributes to maintenance of cell area, size, shape, epithelial sheet organization and trophectoderm cell properties that facilitate blastocyst zona hatching. Inhibits the Wnt/beta-catenin signaling pathway, probably by recruiting CTNNB1 to recycling endosomes and hence preventing its translocation to the nucleus. Participates in angiogenesis. Activates the Hippo signaling pathway in response to cell contact inhibition via interaction with and ubiquitination by Crumbs complex-bound WWP1. Ubiquitinated AMOTL2 then interacts with LATS2 which in turn phosphorylates YAP1, excluding it from the nucleus and localizing it to the cytoplasm and tight junctions, therefore ultimately repressing YAP1-driven transcription of target genes. Acts to inhibit WWTR1/TAZ transcriptional coactivator activity via sequestering WWTR1/TAZ in the cytoplasm and at tight junctions. Regulates the size and protein composition of the podosome cortex and core at myofibril neuromuscular junctions. Selectively promotes FGF-induced MAPK activation through SRC. May play a role in the polarity, proliferation and migration of endothelial cells. In Rattus norvegicus (Rat), this protein is Angiomotin-like protein 2.